We begin with the raw amino-acid sequence, 501 residues long: Bifunctional purine biosynthesis protein PurH (501 aa).

The 144-residue stretch at 1–144 (MKKRALISVF…KNFQDVVVIS (144 aa)) folds into the MGS-like domain.

The protein belongs to the PurH family.

It catalyses the reaction (6R)-10-formyltetrahydrofolate + 5-amino-1-(5-phospho-beta-D-ribosyl)imidazole-4-carboxamide = 5-formamido-1-(5-phospho-D-ribosyl)imidazole-4-carboxamide + (6S)-5,6,7,8-tetrahydrofolate. It carries out the reaction IMP + H2O = 5-formamido-1-(5-phospho-D-ribosyl)imidazole-4-carboxamide. It functions in the pathway purine metabolism; IMP biosynthesis via de novo pathway; 5-formamido-1-(5-phospho-D-ribosyl)imidazole-4-carboxamide from 5-amino-1-(5-phospho-D-ribosyl)imidazole-4-carboxamide (10-formyl THF route): step 1/1. The protein operates within purine metabolism; IMP biosynthesis via de novo pathway; IMP from 5-formamido-1-(5-phospho-D-ribosyl)imidazole-4-carboxamide: step 1/1. This Clostridium botulinum (strain Eklund 17B / Type B) protein is Bifunctional purine biosynthesis protein PurH.